The sequence spans 171 residues: UPF0398 protein STER_0279 (171 aa).

It belongs to the UPF0398 family.

In Streptococcus thermophilus (strain ATCC BAA-491 / LMD-9), this protein is UPF0398 protein STER_0279.